The following is a 912-amino-acid chain: Tiger protein E1 (912 aa).

The N-terminal stretch at Met1–Ser22 is a signal peptide. The Extracellular portion of the chain corresponds to Asp23–Pro815. N-linked (GlcNAc...) asparagine glycosylation is found at Asn54, Asn108, Asn164, Asn183, Asn232, Asn268, Asn323, Asn356, Asn398, Asn407, Asn568, Asn637, Asn653, Asn658, Asn706, Asn716, Asn763, Asn774, Asn781, and Asn809. 2 IPT/TIG domains span residues Ser532 to Thr609 and Pro612 to Ile686. An IPT/TIG 3 domain is found at Thr715–Phe796. Residues Asn816 to Ile836 form a helical membrane-spanning segment. The Cytoplasmic portion of the chain corresponds to Lys837 to Asp912.

It localises to the cell membrane. The protein is Tiger protein E1 (tgrE1) of Dictyostelium discoideum (Social amoeba).